The primary structure comprises 41 residues: Large ribosomal subunit protein bL36 (41 aa).

This sequence belongs to the bacterial ribosomal protein bL36 family.

This Zymomonas mobilis subsp. mobilis (strain ATCC 31821 / ZM4 / CP4) protein is Large ribosomal subunit protein bL36.